Reading from the N-terminus, the 495-residue chain is Probable cytochrome P450 4s3 (495 aa).

Heme contacts are provided by Glu307 and Cys436.

The protein belongs to the cytochrome P450 family. It depends on heme as a cofactor.

It localises to the endoplasmic reticulum membrane. It is found in the microsome membrane. Its function is as follows. May be involved in the metabolism of insect hormones and in the breakdown of synthetic insecticides. This Drosophila melanogaster (Fruit fly) protein is Probable cytochrome P450 4s3 (Cyp4s3).